A 349-amino-acid polypeptide reads, in one-letter code: Isopentenyl-diphosphate delta-isomerase (349 aa).

6–7 (RK) serves as a coordination point for substrate. FMN contacts are provided by residues 62 to 64 (AMT), Ser93, and Asn122. Gln152 serves as a coordination point for substrate. Glu153 contributes to the Mg(2+) binding site. FMN-binding positions include Lys184, Thr214, 259–261 (GVR), and 280–281 (AG).

Belongs to the IPP isomerase type 2 family. In terms of assembly, homooctamer. Dimer of tetramers. FMN serves as cofactor. Requires NADPH as cofactor. The cofactor is Mg(2+).

Its subcellular location is the cytoplasm. It carries out the reaction isopentenyl diphosphate = dimethylallyl diphosphate. In terms of biological role, involved in the biosynthesis of isoprenoids. Catalyzes the 1,3-allylic rearrangement of the homoallylic substrate isopentenyl (IPP) to its allylic isomer, dimethylallyl diphosphate (DMAPP). In Geobacillus sp. (strain WCH70), this protein is Isopentenyl-diphosphate delta-isomerase.